The primary structure comprises 375 residues: Phosphoglucan phosphatase DSP4, amyloplastic (375 aa).

An amyloplast-targeting transit peptide spans 1-42; sequence MFCVQNLPRSSALPLQSFKSHQRRPPCSVNTLGVMSNVNLHR. Residues 49–71 form a disordered region; that stretch reads ISGPTSSAETSDANVEEEKSETY. The span at 51–61 shows a compositional bias: polar residues; the sequence is GPTSSAETSDA. Residues 92 to 249 form the Tyrosine-protein phosphatase domain; that stretch reads NYNFIRPDLI…AADILTGLRK (158 aa). Residue C193 is the Phosphocysteine intermediate of the active site. Substrate is bound at residue 194 to 199; it reads TAGLGR. Positions 254–330 are polysaccharide binding; that stretch reads LTWKNPDCTT…NKDGHVNNFV (77 aa).

Expressed in phloem parenchyma of 16-24 week old seedlings and 2 year old trees (at protein level). Expressed in leaves of 16-24 week old seedlings and 2 year old trees.

It is found in the plastid. The protein resides in the amyloplast. Its subcellular location is the nucleus. In terms of biological role, starch granule-associated phosphoglucan phosphatase involved in the control of starch accumulation. Acts as a major regulator of the initial steps of starch degradation at the granule surface. Functions during the day by dephosphorylating the night-accumulated phospho-oligosaccharides. Can release phosphate from both the C6 and the C3 positions. The polypeptide is Phosphoglucan phosphatase DSP4, amyloplastic (Castanea sativa (Sweet chestnut)).